A 575-amino-acid polypeptide reads, in one-letter code: MKRTHTCGELTLQNVDQKVILQGWVKKIRKLGAMVFIDLKDRYGITQLVIEQENINLINNLKNEYVIEISGIVVKRKSVNKELITGEIEVIVKDLLVINKSELTPFVLENDVNVNEDTRLTYRYLDLRRQVMQNNLIIRAKINHIIRNYLTDLNFLEVETPYFAKSTPEGARHFLVPSRLNKNKFYALPQSPQLFKQLLMISGIDRYYQIVRCFRDEDLRIDRQPEFTQLDLEMSFATSEDVMQISESLIKKILKEVKNFEIKEPLLRLSYKDAIDLYGSDKPDLRYELKIHTLNDIFKNSDIKMFLDSQNKYIRAVCIDQLLTKKQLEELNQQAKQFHFNSIAFIKVENNAWSGSLASQLTEVQKKQLIEEFNIQNKATIILNIGKYEEISQLMGAIRISLAKMFNLETKDDFKLLWVVDFPLFEFSEQENRYVAAHHPFTSPKEESLADFDTNKKDALACAYDLVMNGFEIGGGSQRITNSEIQQRMFDAVELNQKQVEANFGWFMNAYKYGAPYHAGIAWGLDRISMILTDSNSIRDVIAFPKNSLGIDMMSNAPDLVSDKQLDELNIKTVE.

Residue Glu169 participates in L-aspartate binding. The segment at 193 to 196 (QLFK) is aspartate. Arg215 contributes to the L-aspartate binding site. Residues 215–217 (RDE) and Gln224 contribute to the ATP site. Residue His438 coordinates L-aspartate. Position 472 (Glu472) interacts with ATP. Position 479 (Arg479) interacts with L-aspartate. 524 to 527 (GLDR) provides a ligand contact to ATP.

The protein belongs to the class-II aminoacyl-tRNA synthetase family. Type 1 subfamily. In terms of assembly, homodimer.

It localises to the cytoplasm. It carries out the reaction tRNA(Asp) + L-aspartate + ATP = L-aspartyl-tRNA(Asp) + AMP + diphosphate. Catalyzes the attachment of L-aspartate to tRNA(Asp) in a two-step reaction: L-aspartate is first activated by ATP to form Asp-AMP and then transferred to the acceptor end of tRNA(Asp). The chain is Aspartate--tRNA ligase from Mycoplasma capricolum subsp. capricolum (strain California kid / ATCC 27343 / NCTC 10154).